The chain runs to 98 residues: NADH-ubiquinone oxidoreductase chain 4L (98 aa).

The next 3 membrane-spanning stretches (helical) occupy residues Met1–Met21, Ser29–Leu49, and Ile61–Val81.

It belongs to the complex I subunit 4L family. As to quaternary structure, core subunit of respiratory chain NADH dehydrogenase (Complex I) which is composed of 45 different subunits.

The protein resides in the mitochondrion inner membrane. The catalysed reaction is a ubiquinone + NADH + 5 H(+)(in) = a ubiquinol + NAD(+) + 4 H(+)(out). Its function is as follows. Core subunit of the mitochondrial membrane respiratory chain NADH dehydrogenase (Complex I) which catalyzes electron transfer from NADH through the respiratory chain, using ubiquinone as an electron acceptor. Part of the enzyme membrane arm which is embedded in the lipid bilayer and involved in proton translocation. In Mesophylla macconnelli (MacConnell's bat), this protein is NADH-ubiquinone oxidoreductase chain 4L (MT-ND4L).